A 386-amino-acid chain; its full sequence is Formate-dependent phosphoribosylglycinamide formyltransferase (386 aa).

N(1)-(5-phospho-beta-D-ribosyl)glycinamide-binding positions include 10–11 (EL) and Glu-70. Residues Arg-102, Lys-143, 148–153 (SSGKGQ), 183–186 (EAFV), and Glu-191 each bind ATP. In terms of domain architecture, ATP-grasp spans 107 to 298 (DLAAKELGLK…EFELHLRAIL (192 aa)). Residues Glu-256 and Glu-268 each coordinate Mg(2+). N(1)-(5-phospho-beta-D-ribosyl)glycinamide is bound by residues Asp-275, Lys-346, and 353 to 354 (RR).

Belongs to the PurK/PurT family. As to quaternary structure, homodimer.

It carries out the reaction N(1)-(5-phospho-beta-D-ribosyl)glycinamide + formate + ATP = N(2)-formyl-N(1)-(5-phospho-beta-D-ribosyl)glycinamide + ADP + phosphate + H(+). It participates in purine metabolism; IMP biosynthesis via de novo pathway; N(2)-formyl-N(1)-(5-phospho-D-ribosyl)glycinamide from N(1)-(5-phospho-D-ribosyl)glycinamide (formate route): step 1/1. Involved in the de novo purine biosynthesis. Catalyzes the transfer of formate to 5-phospho-ribosyl-glycinamide (GAR), producing 5-phospho-ribosyl-N-formylglycinamide (FGAR). Formate is provided by PurU via hydrolysis of 10-formyl-tetrahydrofolate. This is Formate-dependent phosphoribosylglycinamide formyltransferase from Flavobacterium psychrophilum (strain ATCC 49511 / DSM 21280 / CIP 103535 / JIP02/86).